Consider the following 213-residue polypeptide: Imidazole glycerol phosphate synthase subunit HisH (213 aa).

In terms of domain architecture, Glutamine amidotransferase type-1 spans 4-211 (NIGLIDYGMG…LAWLKKETKD (208 aa)). Catalysis depends on cysteine 82, which acts as the Nucleophile. Residues histidine 186 and glutamate 188 contribute to the active site.

As to quaternary structure, heterodimer of HisH and HisF.

The protein localises to the cytoplasm. The enzyme catalyses 5-[(5-phospho-1-deoxy-D-ribulos-1-ylimino)methylamino]-1-(5-phospho-beta-D-ribosyl)imidazole-4-carboxamide + L-glutamine = D-erythro-1-(imidazol-4-yl)glycerol 3-phosphate + 5-amino-1-(5-phospho-beta-D-ribosyl)imidazole-4-carboxamide + L-glutamate + H(+). It catalyses the reaction L-glutamine + H2O = L-glutamate + NH4(+). The protein operates within amino-acid biosynthesis; L-histidine biosynthesis; L-histidine from 5-phospho-alpha-D-ribose 1-diphosphate: step 5/9. Its function is as follows. IGPS catalyzes the conversion of PRFAR and glutamine to IGP, AICAR and glutamate. The HisH subunit catalyzes the hydrolysis of glutamine to glutamate and ammonia as part of the synthesis of IGP and AICAR. The resulting ammonia molecule is channeled to the active site of HisF. The sequence is that of Imidazole glycerol phosphate synthase subunit HisH from Prochlorococcus marinus (strain SARG / CCMP1375 / SS120).